Consider the following 244-residue polypeptide: Large ribosomal subunit protein uL30B (244 aa).

Positions 1-11 (MSTEKILTPES) are enriched in polar residues. Residues 1–21 (MSTEKILTPESQLKKTKAQQK) are disordered.

The protein belongs to the universal ribosomal protein uL30 family. As to quaternary structure, component of the large ribosomal subunit (LSU). Mature yeast ribosomes consist of a small (40S) and a large (60S) subunit. The 40S small subunit contains 1 molecule of ribosomal RNA (18S rRNA) and 33 different proteins (encoded by 57 genes). The large 60S subunit contains 3 rRNA molecules (25S, 5.8S and 5S rRNA) and 46 different proteins (encoded by 81 genes).

Its subcellular location is the cytoplasm. Functionally, component of the ribosome, a large ribonucleoprotein complex responsible for the synthesis of proteins in the cell. The small ribosomal subunit (SSU) binds messenger RNAs (mRNAs) and translates the encoded message by selecting cognate aminoacyl-transfer RNA (tRNA) molecules. The large subunit (LSU) contains the ribosomal catalytic site termed the peptidyl transferase center (PTC), which catalyzes the formation of peptide bonds, thereby polymerizing the amino acids delivered by tRNAs into a polypeptide chain. The nascent polypeptides leave the ribosome through a tunnel in the LSU and interact with protein factors that function in enzymatic processing, targeting, and the membrane insertion of nascent chains at the exit of the ribosomal tunnel. The chain is Large ribosomal subunit protein uL30B from Saccharomyces cerevisiae (strain ATCC 204508 / S288c) (Baker's yeast).